We begin with the raw amino-acid sequence, 181 residues long: ATP synthase subunit delta (181 aa).

It belongs to the ATPase delta chain family. As to quaternary structure, F-type ATPases have 2 components, F(1) - the catalytic core - and F(0) - the membrane proton channel. F(1) has five subunits: alpha(3), beta(3), gamma(1), delta(1), epsilon(1). F(0) has three main subunits: a(1), b(2) and c(10-14). The alpha and beta chains form an alternating ring which encloses part of the gamma chain. F(1) is attached to F(0) by a central stalk formed by the gamma and epsilon chains, while a peripheral stalk is formed by the delta and b chains.

It localises to the cell inner membrane. Its function is as follows. F(1)F(0) ATP synthase produces ATP from ADP in the presence of a proton or sodium gradient. F-type ATPases consist of two structural domains, F(1) containing the extramembraneous catalytic core and F(0) containing the membrane proton channel, linked together by a central stalk and a peripheral stalk. During catalysis, ATP synthesis in the catalytic domain of F(1) is coupled via a rotary mechanism of the central stalk subunits to proton translocation. Functionally, this protein is part of the stalk that links CF(0) to CF(1). It either transmits conformational changes from CF(0) to CF(1) or is implicated in proton conduction. The sequence is that of ATP synthase subunit delta from Orientia tsutsugamushi (strain Boryong) (Rickettsia tsutsugamushi).